The sequence spans 350 residues: Phenylalanine--tRNA ligase alpha subunit (350 aa).

E259 serves as a coordination point for Mg(2+).

The protein belongs to the class-II aminoacyl-tRNA synthetase family. Phe-tRNA synthetase alpha subunit type 1 subfamily. In terms of assembly, tetramer of two alpha and two beta subunits. Mg(2+) is required as a cofactor.

Its subcellular location is the cytoplasm. The enzyme catalyses tRNA(Phe) + L-phenylalanine + ATP = L-phenylalanyl-tRNA(Phe) + AMP + diphosphate + H(+). The sequence is that of Phenylalanine--tRNA ligase alpha subunit (pheS) from Rickettsia prowazekii (strain Madrid E).